The following is a 220-amino-acid chain: MAYRDQPLGELALSIPRASALFRQYDMDYCCGGKQTLARAAARHDVDIDIIEAQLAQLAEQPIEKDWRAVPLADIIDHIVVRYHDRHREQLPELILQATKVERVHADKPNVPRGLTKYLTALHEELSSHMMKEEQILFPMIKQGMGRQATGPISVMESEHDEAGELVDVIKHVTKNVTPPPEACTTWKAMYNGINEMIDDLMEHISLENNVLFPRALAGE.

The protein belongs to the RIC family. YtfE subfamily. Homodimer.

Its subcellular location is the cytoplasm. In terms of biological role, di-iron-containing protein involved in the repair of iron-sulfur clusters damaged by oxidative and nitrosative stress conditions. The sequence is that of Iron-sulfur cluster repair protein YtfE from Salmonella typhimurium (strain LT2 / SGSC1412 / ATCC 700720).